Consider the following 225-residue polypeptide: NAD(P)H-quinone oxidoreductase subunit K, chloroplastic (225 aa).

[4Fe-4S] cluster is bound by residues C43, C44, C108, and C139.

The protein belongs to the complex I 20 kDa subunit family. In terms of assembly, NDH is composed of at least 16 different subunits, 5 of which are encoded in the nucleus. [4Fe-4S] cluster serves as cofactor.

The protein resides in the plastid. The protein localises to the chloroplast thylakoid membrane. The enzyme catalyses a plastoquinone + NADH + (n+1) H(+)(in) = a plastoquinol + NAD(+) + n H(+)(out). It carries out the reaction a plastoquinone + NADPH + (n+1) H(+)(in) = a plastoquinol + NADP(+) + n H(+)(out). Its function is as follows. NDH shuttles electrons from NAD(P)H:plastoquinone, via FMN and iron-sulfur (Fe-S) centers, to quinones in the photosynthetic chain and possibly in a chloroplast respiratory chain. The immediate electron acceptor for the enzyme in this species is believed to be plastoquinone. Couples the redox reaction to proton translocation, and thus conserves the redox energy in a proton gradient. In Lepidium virginicum (Virginia pepperweed), this protein is NAD(P)H-quinone oxidoreductase subunit K, chloroplastic.